Here is a 339-residue protein sequence, read N- to C-terminus: Type IV secretion system protein PtlH homolog (339 aa).

Belongs to the GSP E family.

This chain is Type IV secretion system protein PtlH homolog (ptlH), found in Bordetella parapertussis (strain 12822 / ATCC BAA-587 / NCTC 13253).